Here is an 86-residue protein sequence, read N- to C-terminus: Large ribosomal subunit protein bL27 (86 aa).

The segment at 1-24 is disordered; it reads MAHKKGTGSTRNGRDSNSKRLGVK.

Belongs to the bacterial ribosomal protein bL27 family.

This chain is Large ribosomal subunit protein bL27, found in Prochlorococcus marinus (strain MIT 9301).